We begin with the raw amino-acid sequence, 129 residues long: MSHIPSELKYATSHEWIRVEANGEAVVGITEHAQDLLGDMVFVDLPEVGKQIGAGDDCAVAESVKAASDIYSPVSGEIVAINEELEGSPELVNSDPYGAGWLFRIKLDDAGELANLLDAEGYQNLVDEE.

The region spanning 24–106 is the Lipoyl-binding domain; that stretch reads EAVVGITEHA…YGAGWLFRIK (83 aa). Lys65 bears the N6-lipoyllysine mark.

This sequence belongs to the GcvH family. The glycine cleavage system is composed of four proteins: P, T, L and H. Requires (R)-lipoate as cofactor.

Its function is as follows. The glycine cleavage system catalyzes the degradation of glycine. The H protein shuttles the methylamine group of glycine from the P protein to the T protein. This is Glycine cleavage system H protein from Aeromonas salmonicida (strain A449).